Consider the following 606-residue polypeptide: Pro-secreted protein ORF2 (606 aa).

Residues 1–19 (MSLCRLLLMLAMCCGVSRG) form the signal peptide. Residues 22–54 (TLPAGGRRGQRRRDNSAQWSTQQRPEGAVGPAP) form a disordered region. The Nuclear localization signal signature appears at 28–34 (RRGQRRR). N-linked (GlcNAc...) asparagine; by host glycosylation is present at Asn-255. The particle formation stretch occupies residues 313–339 (ILGVLFNLADTVLGGLPSTLLRAASGQ). Asn-510 carries an N-linked (GlcNAc...) asparagine; by host glycan.

The protein belongs to the hepevirus capsid protein family. As to quaternary structure, homodimer. Self-assembles to form the capsid. The capsid is dominated by dimers that define the 30 morphological units. Interacts with phosphorylated protein ORF3. In terms of processing, N-glycosylated.

It is found in the secreted. Its subcellular location is the virion. The protein localises to the host cytoplasm. The protein resides in the host endoplasmic reticulum. It localises to the host Golgi apparatus. It is found in the host cell surface. Its subcellular location is the host nucleus. Plays a role in the inhibition of host antibody-mediated neutralization without blocking viral cell entry. In terms of biological role, forms an icosahedral capsid with a T=1 symmetry and a 34 nm diameter. The capsid is composed of 60 copies linked to each other. Binds to the 5' end of the genomic RNA to mediate genome encapsidation. In Gallus gallus (Chicken), this protein is Pro-secreted protein ORF2.